Here is a 249-residue protein sequence, read N- to C-terminus: Tryptophan synthase alpha chain (249 aa).

Residues Glu-43 and Asp-54 each act as proton acceptor in the active site.

It belongs to the TrpA family. Tetramer of two alpha and two beta chains.

It catalyses the reaction (1S,2R)-1-C-(indol-3-yl)glycerol 3-phosphate + L-serine = D-glyceraldehyde 3-phosphate + L-tryptophan + H2O. The protein operates within amino-acid biosynthesis; L-tryptophan biosynthesis; L-tryptophan from chorismate: step 5/5. Its function is as follows. The alpha subunit is responsible for the aldol cleavage of indoleglycerol phosphate to indole and glyceraldehyde 3-phosphate. The chain is Tryptophan synthase alpha chain from Campylobacter jejuni subsp. doylei (strain ATCC BAA-1458 / RM4099 / 269.97).